A 387-amino-acid chain; its full sequence is Sulfoacetaldehyde reductase (387 aa).

This sequence belongs to the iron-containing alcohol dehydrogenase family.

The catalysed reaction is 2-hydroxyethane-1-sulfonate + NAD(+) = sulfoacetaldehyde + NADH + H(+). It functions in the pathway organosulfur degradation; alkanesulfonate degradation. Involved in an anaerobic respiration pathway that converts the sulfonate taurine (2-aminoethanesulfonate) to ammonia, acetate and sulfide. Catalyzes the NADH-dependent reduction of sulfoacetaldehyde to 2-hydroxyethane-1-sulfonate (isethionate). Does not accept acetaldehyde as a substrate. This Bilophila wadsworthia (strain 3_1_6) protein is Sulfoacetaldehyde reductase.